Reading from the N-terminus, the 248-residue chain is Aquaporin Z (248 aa).

2 consecutive transmembrane segments (helical) span residues F11–F31 and I36–I56. Residues N65–A67 carry the NPA 1 motif. Transmembrane regions (helical) follow at residues I87–G107, L132–G152, and G161–V181. Positions N187–A189 match the NPA 2 motif. The chain crosses the membrane as a helical span at residues I203–F223.

The protein belongs to the MIP/aquaporin (TC 1.A.8) family. In terms of assembly, homotetramer.

The protein localises to the cell inner membrane. It carries out the reaction H2O(in) = H2O(out). Channel that permits osmotically driven movement of water in both directions. It is involved in the osmoregulation and in the maintenance of cell turgor during volume expansion in rapidly growing cells. It mediates rapid entry or exit of water in response to abrupt changes in osmolarity. This is Aquaporin Z from Gloeobacter violaceus (strain ATCC 29082 / PCC 7421).